A 494-amino-acid chain; its full sequence is Autocrine proliferation repressor protein A (494 aa).

Residues 1 to 18 (MSKLLILLLLSLVASIFS) form the signal peptide. 3 N-linked (GlcNAc...) asparagine glycosylation sites follow: Asn37, Asn153, and Asn302.

Belongs to the pqaA family. In terms of assembly, interacts with cfaD.

The protein localises to the secreted. Its function is as follows. Inhibitor that slows proliferation of secreting cells (also known as chalone). May function by binding to cell surface receptors. Requires cfaD for activity. Overexpression slows proliferation. The protein is Autocrine proliferation repressor protein A (aprA) of Dictyostelium discoideum (Social amoeba).